The chain runs to 163 residues: Mediator of RNA polymerase II transcription subunit 10 (163 aa).

The tract at residues 57–79 (AAPDPSYVQSPPSRTGLSPADPP) is disordered. A compositionally biased stretch (polar residues) spans 63–72 (YVQSPPSRTG).

It belongs to the Mediator complex subunit 10 family. Component of the Mediator complex.

The protein resides in the nucleus. Functionally, component of the Mediator complex, a coactivator involved in the regulated transcription of nearly all RNA polymerase II-dependent genes. Mediator functions as a bridge to convey information from gene-specific regulatory proteins to the basal RNA polymerase II transcription machinery. Mediator is recruited to promoters by direct interactions with regulatory proteins and serves as a scaffold for the assembly of a functional preinitiation complex with RNA polymerase II and the general transcription factors. The sequence is that of Mediator of RNA polymerase II transcription subunit 10 (NUT2) from Coccidioides immitis (strain RS) (Valley fever fungus).